The primary structure comprises 176 residues: MSSHQEPVVLGKLGASHGIKGWLKITSYTDSVEDIFDYSPWLIKEQGEWREVKVAQWRYQGKAIIAALEGVTTRDQAQMLTNCEIAIPAEAMKALPEDEFYWRDLIGCEVVNTKGYKMGKVDQIVETGSNDVLLVKANAKDGFGKTERMIPFVTEQFILEVNLAEKQILVDWDPDF.

Positions 97-176 constitute a PRC barrel domain; the sequence is EDEFYWRDLI…QILVDWDPDF (80 aa).

It belongs to the RimM family. Binds ribosomal protein uS19.

The protein localises to the cytoplasm. In terms of biological role, an accessory protein needed during the final step in the assembly of 30S ribosomal subunit, possibly for assembly of the head region. Essential for efficient processing of 16S rRNA. May be needed both before and after RbfA during the maturation of 16S rRNA. It has affinity for free ribosomal 30S subunits but not for 70S ribosomes. The protein is Ribosome maturation factor RimM of Shewanella loihica (strain ATCC BAA-1088 / PV-4).